A 238-amino-acid polypeptide reads, in one-letter code: MIAFLVLLSLAAVLQQSSGTVDFASESSNKNDYQKEIVDKHNDLRRSVKPTARNMLQMKWNSRAAQNAKRWANRCTFAHSPPYTRTVGKLRCGENIFMSSQPFAWSGVVQAWYDEVKKFVYGIGAKPPSSVTGHYTQVVWYKSHLLGCASAKCSSTKYLYVCQYCPAGNIVGSIATPYKSGPPCGDCPSACDNGLCTNPCKHNDDLSNCKTLVKKHKCQTEWIKSKCPATCFCRTEII.

The N-terminal stretch at 1–19 is a signal peptide; it reads MIAFLVLLSLAAVLQQSSG. Positions 20-28 are excised as a propeptide; the sequence is TVDFASESS. One can recognise an SCP domain in the interval 38 to 164; sequence VDKHNDLRRS…STKYLYVCQY (127 aa). 8 cysteine pairs are disulfide-bonded: Cys75/Cys153, Cys92/Cys165, Cys148/Cys162, Cys184/Cys191, Cys187/Cys196, Cys200/Cys233, Cys209/Cys227, and Cys218/Cys231. The ShKT domain occupies 200-233; that stretch reads CKHNDDLSNCKTLVKKHKCQTEWIKSKCPATCFC.

Belongs to the CRISP family. As to expression, expressed by the venom gland.

Its subcellular location is the secreted. Functionally, blocks olfactory (CNGA2) and retinal (CNGA1) CNG channel currents. Does not affect neither depolarization- nor caffeine-induced contraction of smooth muscle. The sequence is that of Cysteine-rich venom protein pseudechetoxin-like from Pseudonaja textilis (Eastern brown snake).